We begin with the raw amino-acid sequence, 1479 residues long: Chromosome partition protein MukB (1479 aa).

Residue 34–41 coordinates ATP; that stretch reads GGNGAGKS. Coiled-coil stretches lie at residues 138 to 163 and 331 to 664; these read ETLN…MEGV and QAAS…RLSQ. The tract at residues 665–782 is flexible hinge; it reads PGGSEDPRLN…ALPLFGRAAR (118 aa). 2 coiled-coil regions span residues 831 to 1112 and 1206 to 1257; these read DDPE…TAKA and VEAI…MLNQ.

Belongs to the SMC family. MukB subfamily. As to quaternary structure, homodimerization via its hinge domain. Binds to DNA via its C-terminal region. Interacts, and probably forms a ternary complex, with MukE and MukF via its C-terminal region. The complex formation is stimulated by calcium or magnesium. Interacts with tubulin-related protein FtsZ.

The protein resides in the cytoplasm. It is found in the nucleoid. Functionally, plays a central role in chromosome condensation, segregation and cell cycle progression. Functions as a homodimer, which is essential for chromosome partition. Involved in negative DNA supercoiling in vivo, and by this means organize and compact chromosomes. May achieve or facilitate chromosome segregation by condensation DNA from both sides of a centrally located replisome during cell division. The sequence is that of Chromosome partition protein MukB from Klebsiella pneumoniae.